Reading from the N-terminus, the 540-residue chain is Phenylalanine--tRNA ligase beta subunit (540 aa).

In terms of domain architecture, B5 spans 268–343; it reads LQHKSIKITA…ITYGYNNLSP (76 aa). The Mg(2+) site is built by aspartate 321, aspartate 327, glutamate 330, and glutamate 331.

This sequence belongs to the phenylalanyl-tRNA synthetase beta subunit family. Type 2 subfamily. In terms of assembly, tetramer of two alpha and two beta subunits. The cofactor is Mg(2+).

It is found in the cytoplasm. The enzyme catalyses tRNA(Phe) + L-phenylalanine + ATP = L-phenylalanyl-tRNA(Phe) + AMP + diphosphate + H(+). This is Phenylalanine--tRNA ligase beta subunit from Sulfurisphaera tokodaii (strain DSM 16993 / JCM 10545 / NBRC 100140 / 7) (Sulfolobus tokodaii).